Consider the following 339-residue polypeptide: 3-isopropylmalate dehydrogenase (339 aa).

Residues R87, R97, R124, and D214 each contribute to the substrate site. Mg(2+) is bound by residues D214, D238, and D242. Position 274 to 286 (274 to 286 (GSAPDIAGQGIAD)) interacts with NAD(+).

Belongs to the isocitrate and isopropylmalate dehydrogenases family. LeuB type 2 subfamily. Homodimer. Mg(2+) is required as a cofactor. It depends on Mn(2+) as a cofactor.

The protein resides in the cytoplasm. It catalyses the reaction (2R,3S)-3-isopropylmalate + NAD(+) = 4-methyl-2-oxopentanoate + CO2 + NADH. The protein operates within amino-acid biosynthesis; L-leucine biosynthesis; L-leucine from 3-methyl-2-oxobutanoate: step 3/4. Its function is as follows. Catalyzes the oxidation of 3-carboxy-2-hydroxy-4-methylpentanoate (3-isopropylmalate) to 3-carboxy-4-methyl-2-oxopentanoate. The product decarboxylates to 4-methyl-2 oxopentanoate. The protein is 3-isopropylmalate dehydrogenase of Mycobacterium ulcerans (strain Agy99).